The chain runs to 821 residues: Pentatricopeptide repeat-containing protein At4g04790, mitochondrial (821 aa).

A mitochondrion-targeting transit peptide spans 1 to 74 (MVVSKVNKSL…KLLHVTTSDK (74 aa)). 7 PPR repeats span residues 372–406 (SSTS…GLMI), 407–441 (SADI…SVKP), 442–476 (NTEN…NLEP), 477–511 (NSSM…GVKP), 512–542 (DSIT…AGVQ), 544–574 (TKRI…PDVP), and 578–612 (QNEL…ECHV). The disordered stretch occupies residues 801–821 (AFSQAPNKKKPKKKMIVLSTK).

Belongs to the PPR family. P subfamily.

It localises to the mitochondrion. The chain is Pentatricopeptide repeat-containing protein At4g04790, mitochondrial from Arabidopsis thaliana (Mouse-ear cress).